Consider the following 216-residue polypeptide: Somatotropin (216 aa).

Positions 1-26 are cleaved as a signal peptide; sequence MAAGPRNSVLLAFALLCLPWPQEVGT. Residue histidine 45 participates in Zn(2+) binding. Cysteines 78 and 189 form a disulfide. The residue at position 131 (serine 131) is a Phosphoserine. Glutamate 198 contacts Zn(2+). Cysteine 206 and cysteine 214 are joined by a disulfide.

This sequence belongs to the somatotropin/prolactin family.

Its subcellular location is the secreted. Functionally, plays an important role in growth control. Its major role in stimulating body growth is to stimulate the liver and other tissues to secrete IGF1. It stimulates both the differentiation and proliferation of myoblasts. It also stimulates amino acid uptake and protein synthesis in muscle and other tissues. The protein is Somatotropin (GH1) of Felis catus (Cat).